The following is a 207-amino-acid chain: ATP-dependent Clp protease proteolytic subunit (207 aa).

Serine 111 serves as the catalytic Nucleophile. Histidine 136 is a catalytic residue.

Belongs to the peptidase S14 family. In terms of assembly, fourteen ClpP subunits assemble into 2 heptameric rings which stack back to back to give a disk-like structure with a central cavity, resembling the structure of eukaryotic proteasomes.

The protein resides in the cytoplasm. It carries out the reaction Hydrolysis of proteins to small peptides in the presence of ATP and magnesium. alpha-casein is the usual test substrate. In the absence of ATP, only oligopeptides shorter than five residues are hydrolyzed (such as succinyl-Leu-Tyr-|-NHMec, and Leu-Tyr-Leu-|-Tyr-Trp, in which cleavage of the -Tyr-|-Leu- and -Tyr-|-Trp bonds also occurs).. In terms of biological role, cleaves peptides in various proteins in a process that requires ATP hydrolysis. Has a chymotrypsin-like activity. Plays a major role in the degradation of misfolded proteins. The chain is ATP-dependent Clp protease proteolytic subunit from Yersinia enterocolitica serotype O:8 / biotype 1B (strain NCTC 13174 / 8081).